Reading from the N-terminus, the 61-residue chain is Fasciculin-2 (61 aa).

Cystine bridges form between Cys-3/Cys-22, Cys-17/Cys-39, Cys-41/Cys-52, and Cys-53/Cys-59.

This sequence belongs to the three-finger toxin family. Short-chain subfamily. Acn-esterase inhibitor sub-subfamily. In terms of tissue distribution, expressed by the venom gland.

It is found in the secreted. In terms of biological role, interferes with neuromuscular transmission by inhibiting the enzyme acetylcholinesterase (AChE) present at the neuromuscular junction. It selectively binds and inhibits with a 1:1 stoichiometry the mammalian and electric fish AChE at picomolar concentrations. It is highly specific for the peripheral site of AChE and blocks the entry of acetylcholine into the active site of the enzyme (through the Met-33 residue), thereby preventing its breakdown. It has been called fasciculin since after injection into mice it causes severe, generalized and long-lasting (5-7 hours) fasciculations. The protein is Fasciculin-2 of Dendroaspis angusticeps (Eastern green mamba).